We begin with the raw amino-acid sequence, 458 residues long: Monomethylamine methyltransferase MtmB2 (458 aa).

Residue pyrrolysine 202 is a non-standard amino acid, pyrrolysine.

The protein belongs to the monomethylamine methyltransferase family. In terms of assembly, can form a complex with MtmC (MtmC1 or MtmC2).

The catalysed reaction is Co(I)-[methylamine-specific corrinoid protein] + methylamine + H(+) = methyl-Co(III)-[methylamine-specific corrinoid protein] + NH4(+). Its pathway is one-carbon metabolism; methanogenesis from methylamine. In terms of biological role, catalyzes the transfer of the methyl group from monomethylamine to the corrinoid cofactor of MtmC (MtmC1 or MtmC2). The chain is Monomethylamine methyltransferase MtmB2 (mtmB2) from Methanosarcina barkeri.